Consider the following 698-residue polypeptide: MTSLQQQQQQQRVKYGPPHHIKRRPYHPILESLEFQTNQHLIQEYSLDIVNTLSQLESLTLVNPAMIDLQPEIQWFMRPFLLDFLIELHSSFKLQPTTLFLCLNIIDRYCAKRIVFKRHYQLVGCTALWIASKYEDKKSRVPTLKELTIMCRNAYDEEMFVQMEMHILSTLDWSIGHPTLEDCLQLAIDSNNLSNNTTNDIENKSVRPNRKSSISSAVTAVARFLCELSLYDKYFLSVPPSLIAITANLLSCSMLQIPHASITLKNLIEQEIINPQQKKQKKAFSSNSSRTTTASYTHQNQSDVRHSSFDEDIDLDSGDEGDDDEDYIDEFYETNNYDDTNATTFDESINKSTTINDENQPPQIHTPFLSGLDEDSILSIKKICLMLIIQLSKVTEVLSKKYENLGVIQVINNFHSNYKFIIQSIYENQELLLNTINDSTNNNEIDYKLIQSSEILLQFPKFDEYLTEDEDENVSTDDEANSQPQGYDGSGSDGNNQLFTPKSPNAFSSNSSLTLNNHPQSMVPVTPPSATSQYSLFSNKNNRTHESTSGLNSTCNTPTHISISSFAPPQPPPGSILKPKLTSINSTNSLKIKKLTSNSNSSNINIHHGHHNTKQEKRYSHISIGSNSSSKYDGFSPIKSISTNGSLITNNGSFTNIVNNTNSSSPLMNQQQQYYHQQQHQQQVTQSSLYQHHHQYHQ.

Residues 1–11 (MTSLQQQQQQQ) show a composition bias toward low complexity. Disordered stretches follow at residues 1–21 (MTSL…PHHI), 277–326 (QKKQ…DDED), 469–577 (DEDE…GSIL), 599–619 (SNSS…EKRY), and 659–698 (NNTN…QYHQ). Residues 277–302 (QKKQKKAFSSNSSRTTTASYTHQNQS) are compositionally biased toward polar residues. Composition is skewed to acidic residues over residues 310 to 326 (DEDI…DDED) and 469 to 480 (DEDENVSTDDEA). Composition is skewed to polar residues over residues 493 to 520 (DGNN…NHPQ) and 528 to 567 (PSAT…SSFA). Over residues 659–669 (NNTNSSSPLMN) the composition is skewed to polar residues. Residues 670-690 (QQQQYYHQQQHQQQVTQSSLY) show a composition bias toward low complexity.

The protein belongs to the cyclin family.

In terms of biological role, essential for the control of the cell cycle at the G1/S (start) transition. Interacts with the CDC2 protein kinase to form MPF. The sequence is that of G1/S-specific cyclin CCN1 (CCN1) from Candida albicans (strain WO-1) (Yeast).